A 132-amino-acid polypeptide reads, in one-letter code: Small ribosomal subunit protein uS8 (132 aa).

Belongs to the universal ribosomal protein uS8 family. As to quaternary structure, part of the 30S ribosomal subunit. Contacts proteins S5 and S12.

One of the primary rRNA binding proteins, it binds directly to 16S rRNA central domain where it helps coordinate assembly of the platform of the 30S subunit. The chain is Small ribosomal subunit protein uS8 from Flavobacterium psychrophilum (strain ATCC 49511 / DSM 21280 / CIP 103535 / JIP02/86).